The following is a 120-amino-acid chain: Large ribosomal subunit protein uL22 (120 aa).

Residues Met1 to Lys20 are disordered.

Belongs to the universal ribosomal protein uL22 family. In terms of assembly, part of the 50S ribosomal subunit.

Functionally, this protein binds specifically to 23S rRNA; its binding is stimulated by other ribosomal proteins, e.g. L4, L17, and L20. It is important during the early stages of 50S assembly. It makes multiple contacts with different domains of the 23S rRNA in the assembled 50S subunit and ribosome. The globular domain of the protein is located near the polypeptide exit tunnel on the outside of the subunit, while an extended beta-hairpin is found that lines the wall of the exit tunnel in the center of the 70S ribosome. The protein is Large ribosomal subunit protein uL22 of Borrelia hermsii (strain HS1 / DAH).